A 576-amino-acid polypeptide reads, in one-letter code: Interleukin-1 receptor type 1 (576 aa).

An N-terminal signal peptide occupies residues 1-19 (MENMKVLLGLICLMVPLLS). Residues 20–338 (LEIDVCTEYP…QLIYPVPDFK (319 aa)) are Extracellular-facing. 3 cysteine pairs are disulfide-bonded: cysteine 25–cysteine 107, cysteine 46–cysteine 99, and cysteine 145–cysteine 199. 3 Ig-like C2-type domains span residues 25 to 115 (CTEY…VTVT), 121 to 213 (PGLC…YPVT), and 229 to 329 (PVIL…AHVQ). N-linked (GlcNAc...) asparagine glycans are attached at residues asparagine 63, asparagine 103, asparagine 174, asparagine 236, asparagine 252, asparagine 266, and asparagine 300. Residues cysteine 251 and cysteine 315 are joined by a disulfide bond. Residues 339–359 (NYLIGGFIILTATIVCCVCIY) traverse the membrane as a helical segment. Topologically, residues 360 to 576 (KVFKVDIVLW…LPAATHLPLG (217 aa)) are cytoplasmic. The region spanning 386-541 (KTYDAYILYP…RFWKNLRYQM (156 aa)) is the TIR domain. Glutamate 473 is an active-site residue. A Phosphotyrosine modification is found at tyrosine 499. The residue at position 556 (threonine 556) is a Phosphothreonine; by PKC.

This sequence belongs to the interleukin-1 receptor family. The interleukin-1 receptor complex is a heterodimer of IL1R1 and IL1RAP. Interacts with PIK3R1. Interacts with IL1A. Post-translationally, a soluble form (sIL1R1) is probably produced by proteolytic cleavage at the cell surface (shedding). Rapidly phosphorylated on Tyr-499 in response to IL-1, which creates a SH2 binding site for the PI 3-kinase regulatory subunit PIK3R1. Isoform 2 is expressed in various brain tissues.

The protein localises to the membrane. The protein resides in the cell membrane. Its subcellular location is the secreted. It carries out the reaction NAD(+) + H2O = ADP-D-ribose + nicotinamide + H(+). In terms of biological role, receptor for IL1A, IL1B and IL1RN. After binding to interleukin-1 associates with the coreceptor IL1RAP to form the high affinity interleukin-1 receptor complex which mediates interleukin-1-dependent activation of NF-kappa-B, MAPK and other pathways. Signaling involves the recruitment of adapter molecules such as TOLLIP, MYD88, and IRAK1 or IRAK2 via the respective TIR domains of the receptor/coreceptor subunits. Binds ligands with comparable affinity and binding of antagonist IL1RN prevents association with IL1RAP to form a signaling complex. Involved in IL1B-mediated costimulation of IFNG production from T-helper 1 (Th1) cells. Its function is as follows. Unable to mediate canonical IL-1 signaling. Cooperates with IL1RAP isoform 3 to mediate IL1B-induced neuronal activity including IL1B-potentiated NMDA-induced calcium influx mediated by Akt kinase activation. This Mus musculus (Mouse) protein is Interleukin-1 receptor type 1 (Il1r1).